We begin with the raw amino-acid sequence, 419 residues long: CinA-like protein (419 aa).

The protein belongs to the CinA family.

The polypeptide is CinA-like protein (Parasynechococcus marenigrum (strain WH8102)).